Reading from the N-terminus, the 153-residue chain is Ribosome maturation factor RimP (153 aa).

The protein belongs to the RimP family.

Its subcellular location is the cytoplasm. In terms of biological role, required for maturation of 30S ribosomal subunits. The polypeptide is Ribosome maturation factor RimP (Marinomonas sp. (strain MWYL1)).